Reading from the N-terminus, the 194-residue chain is Protein GrpE (194 aa).

Residues 1-40 are disordered; that stretch reads MSRKHHKEQEEIQEQETISAGAAETPAEETAAIPAATEAD. The segment covering 20–38 has biased composition (low complexity); it reads AGAAETPAEETAAIPAATE.

Belongs to the GrpE family. Homodimer.

It localises to the cytoplasm. Participates actively in the response to hyperosmotic and heat shock by preventing the aggregation of stress-denatured proteins, in association with DnaK and GrpE. It is the nucleotide exchange factor for DnaK and may function as a thermosensor. Unfolded proteins bind initially to DnaJ; upon interaction with the DnaJ-bound protein, DnaK hydrolyzes its bound ATP, resulting in the formation of a stable complex. GrpE releases ADP from DnaK; ATP binding to DnaK triggers the release of the substrate protein, thus completing the reaction cycle. Several rounds of ATP-dependent interactions between DnaJ, DnaK and GrpE are required for fully efficient folding. In Chlorobaculum tepidum (strain ATCC 49652 / DSM 12025 / NBRC 103806 / TLS) (Chlorobium tepidum), this protein is Protein GrpE.